The sequence spans 143 residues: Peptide methionine sulfoxide reductase MsrB (143 aa).

In terms of domain architecture, MsrB spans 16–139 (DAELRRRLTP…NSAALNFESR (124 aa)). Zn(2+) contacts are provided by cysteine 55, cysteine 58, cysteine 104, and cysteine 107. The active-site Nucleophile is the cysteine 128.

Belongs to the MsrB Met sulfoxide reductase family. It depends on Zn(2+) as a cofactor.

It carries out the reaction L-methionyl-[protein] + [thioredoxin]-disulfide + H2O = L-methionyl-(R)-S-oxide-[protein] + [thioredoxin]-dithiol. This chain is Peptide methionine sulfoxide reductase MsrB, found in Burkholderia orbicola (strain MC0-3).